The sequence spans 539 residues: Probable protein kinase UbiB (539 aa).

One can recognise a Protein kinase domain in the interval Arg125–Leu493. Residues Leu131–Val139 and Lys153 contribute to the ATP site. Asp288 serves as the catalytic Proton acceptor. Transmembrane regions (helical) follow at residues Leu495 to Ala515 and Leu517 to Val537.

It belongs to the ABC1 family. UbiB subfamily.

It is found in the cell inner membrane. It participates in cofactor biosynthesis; ubiquinone biosynthesis [regulation]. In terms of biological role, is probably a protein kinase regulator of UbiI activity which is involved in aerobic coenzyme Q (ubiquinone) biosynthesis. The polypeptide is Probable protein kinase UbiB (Pseudomonas putida (strain W619)).